The sequence spans 257 residues: MLFLISPAKSLDYEHPAPVPDAGVPHFSAAAGELIGLLRQHDERGIAELMDLSEPLAALNVARYAAFSPRPTSANSKPALFAFDGDVYGGLGAHELSRPQVRWVQEHVAILSGLYGVLRPLDRLQPYRLEMGTRLANPLGKDLYAFWRTRIAEHLNERLAGQRAPVVVNLASEEYFKAVDRSELRARVVHCVFQDWKGGAYKIISFHAKRARGLMVRYAALHRARSPRALAGFDLEGYAFDASASEPDRMVFRRRLP.

It belongs to the UPF0246 family.

The polypeptide is UPF0246 protein Mpe_A2092 (Methylibium petroleiphilum (strain ATCC BAA-1232 / LMG 22953 / PM1)).